A 692-amino-acid polypeptide reads, in one-letter code: Elongation factor G (692 aa).

The tr-type G domain occupies 8–282 (EKTRNIGIMA…GVVDYLPSPV (275 aa)). GTP-binding positions include 17-24 (AHIDAGKT), 81-85 (DTPGH), and 135-138 (NKMD).

Belongs to the TRAFAC class translation factor GTPase superfamily. Classic translation factor GTPase family. EF-G/EF-2 subfamily.

It is found in the cytoplasm. In terms of biological role, catalyzes the GTP-dependent ribosomal translocation step during translation elongation. During this step, the ribosome changes from the pre-translocational (PRE) to the post-translocational (POST) state as the newly formed A-site-bound peptidyl-tRNA and P-site-bound deacylated tRNA move to the P and E sites, respectively. Catalyzes the coordinated movement of the two tRNA molecules, the mRNA and conformational changes in the ribosome. In Geobacillus kaustophilus (strain HTA426), this protein is Elongation factor G.